The chain runs to 254 residues: 5'/3'-nucleotidase SurE (254 aa).

Residues Asp-8, Asp-9, Ser-39, and Asn-92 each contribute to the a divalent metal cation site.

The protein belongs to the SurE nucleotidase family. Requires a divalent metal cation as cofactor.

It is found in the cytoplasm. The catalysed reaction is a ribonucleoside 5'-phosphate + H2O = a ribonucleoside + phosphate. It catalyses the reaction a ribonucleoside 3'-phosphate + H2O = a ribonucleoside + phosphate. The enzyme catalyses [phosphate](n) + H2O = [phosphate](n-1) + phosphate + H(+). Nucleotidase with a broad substrate specificity as it can dephosphorylate various ribo- and deoxyribonucleoside 5'-monophosphates and ribonucleoside 3'-monophosphates with highest affinity to 3'-AMP. Also hydrolyzes polyphosphate (exopolyphosphatase activity) with the preference for short-chain-length substrates (P20-25). Might be involved in the regulation of dNTP and NTP pools, and in the turnover of 3'-mononucleotides produced by numerous intracellular RNases (T1, T2, and F) during the degradation of various RNAs. The chain is 5'/3'-nucleotidase SurE from Edwardsiella ictaluri (strain 93-146).